A 90-amino-acid polypeptide reads, in one-letter code: Cytochrome c7 (90 aa).

Residues 1–20 (MKRIIASLALSVFCAGLAFA) form the signal peptide. 12 residues coordinate heme: His-37, His-40, Cys-47, Cys-50, His-51, His-67, Cys-70, Cys-73, His-74, Cys-84, Cys-87, and His-88.

In terms of processing, binds 3 heme groups per subunit.

Functionally, may be involved in anaerobic iron respiration. This is Cytochrome c7 from Geobacter metallireducens (strain ATCC 53774 / DSM 7210 / GS-15).